Consider the following 363-residue polypeptide: Double-strand-specific pac1 ribonuclease (363 aa).

Disordered regions lie at residues 1 to 35 (MGRFKRHHEGDSDSSSSASDSLSRGRRSLGHKRSS) and 92 to 138 (SRHD…PPLR). A compositionally biased stretch (low complexity) spans 13–22 (DSSSSASDSL). Over residues 24-35 (RGRRSLGHKRSS) the composition is skewed to basic residues. Ser122 is subject to Phosphoserine. The 124-residue stretch at 139 to 262 (SEKLKEQVFM…YLGALILDGQ (124 aa)) folds into the RNase III domain. The 72-residue stretch at 285-356 (RPIDKLAKSK…AMQALEVLAK (72 aa)) folds into the DRBM domain.

It depends on Mg(2+) as a cofactor.

The catalysed reaction is Endonucleolytic cleavage to 5'-phosphomonoester.. Functionally, digests double-stranded RNA. Converts long double-stranded RNAs into short oligonucleotides, leaving 5'-phosphates on their cleavage products. Probably inhibits mating and meiosis by degrading a specific mRNA required for sexual development. The protein is Double-strand-specific pac1 ribonuclease (pac1) of Schizosaccharomyces pombe (strain 972 / ATCC 24843) (Fission yeast).